The chain runs to 148 residues: UPF0756 membrane protein YeaL (148 aa).

4 helical membrane passes run 14–34 (ALGF…LIIV), 51–71 (LSIG…SGTL), 86–106 (LVAI…VTLM), and 121–141 (VLGV…AGLV).

Belongs to the UPF0756 family.

The protein localises to the cell membrane. The polypeptide is UPF0756 membrane protein YeaL (Escherichia coli (strain B / REL606)).